A 44-amino-acid chain; its full sequence is Large ribosomal subunit protein bL34 (44 aa).

2 stretches are compositionally biased toward basic residues: residues Met1–Lys14 and Leu31–Val44. Residues Met1 to Val44 are disordered.

The protein belongs to the bacterial ribosomal protein bL34 family.

The chain is Large ribosomal subunit protein bL34 from Gloeobacter violaceus (strain ATCC 29082 / PCC 7421).